Reading from the N-terminus, the 199-residue chain is dITP/XTP pyrophosphatase (199 aa).

8–13 (SGNAGK) contacts substrate. The Proton acceptor role is filled by aspartate 69. Aspartate 69 contacts Mg(2+). Residues serine 70, 154 to 157 (FGYN), lysine 177, and 182 to 183 (HR) each bind substrate.

The protein belongs to the HAM1 NTPase family. Homodimer. Requires Mg(2+) as cofactor.

The enzyme catalyses XTP + H2O = XMP + diphosphate + H(+). It carries out the reaction dITP + H2O = dIMP + diphosphate + H(+). It catalyses the reaction ITP + H2O = IMP + diphosphate + H(+). Functionally, pyrophosphatase that catalyzes the hydrolysis of nucleoside triphosphates to their monophosphate derivatives, with a high preference for the non-canonical purine nucleotides XTP (xanthosine triphosphate), dITP (deoxyinosine triphosphate) and ITP. Seems to function as a house-cleaning enzyme that removes non-canonical purine nucleotides from the nucleotide pool, thus preventing their incorporation into DNA/RNA and avoiding chromosomal lesions. This Xylella fastidiosa (strain Temecula1 / ATCC 700964) protein is dITP/XTP pyrophosphatase.